Consider the following 563-residue polypeptide: Lipoprotein LpqB (563 aa).

The signal sequence occupies residues 1 to 19 (MRRMKALTAAMTAALLVSG). C20 carries N-palmitoyl cysteine lipidation. The S-diacylglycerol cysteine moiety is linked to residue C20.

The protein belongs to the LpqB lipoprotein family.

The protein resides in the cell membrane. The chain is Lipoprotein LpqB from Corynebacterium efficiens (strain DSM 44549 / YS-314 / AJ 12310 / JCM 11189 / NBRC 100395).